Reading from the N-terminus, the 248-residue chain is Adenosylcobinamide-GDP ribazoletransferase (248 aa).

6 helical membrane-spanning segments follow: residues 34–54 (LVFAPVVGLLIGGILTILFYI), 58–78 (FFPPGVTGILLIAAYIMLTGG), 113–133 (AVLAVICVVILNYALLSSIPL), 139–159 (ALLLFPVAGRIGSLVGAGSTV), 185–205 (IIYFIVSLLVLNIKGLLLAAA), and 227–247 (DILGAVCELNQTFFLILFYLF).

Belongs to the CobS family. Mg(2+) serves as cofactor.

The protein resides in the cell membrane. The catalysed reaction is alpha-ribazole + adenosylcob(III)inamide-GDP = adenosylcob(III)alamin + GMP + H(+). The enzyme catalyses alpha-ribazole 5'-phosphate + adenosylcob(III)inamide-GDP = adenosylcob(III)alamin 5'-phosphate + GMP + H(+). The protein operates within cofactor biosynthesis; adenosylcobalamin biosynthesis; adenosylcobalamin from cob(II)yrinate a,c-diamide: step 7/7. Functionally, joins adenosylcobinamide-GDP and alpha-ribazole to generate adenosylcobalamin (Ado-cobalamin). Also synthesizes adenosylcobalamin 5'-phosphate from adenosylcobinamide-GDP and alpha-ribazole 5'-phosphate. The sequence is that of Adenosylcobinamide-GDP ribazoletransferase from Acetivibrio thermocellus (strain ATCC 27405 / DSM 1237 / JCM 9322 / NBRC 103400 / NCIMB 10682 / NRRL B-4536 / VPI 7372) (Clostridium thermocellum).